A 366-amino-acid chain; its full sequence is tRNA 2-selenouridine synthase (366 aa).

The Rhodanese domain occupies 12 to 135 (FLNDVPMMDA…MRTFLLDTLH (124 aa)). Catalysis depends on cysteine 95, which acts as the S-selanylcysteine intermediate.

This sequence belongs to the SelU family. In terms of assembly, monomer.

It catalyses the reaction 5-methylaminomethyl-2-thiouridine(34) in tRNA + selenophosphate + (2E)-geranyl diphosphate + H2O + H(+) = 5-methylaminomethyl-2-selenouridine(34) in tRNA + (2E)-thiogeraniol + phosphate + diphosphate. The catalysed reaction is 5-methylaminomethyl-2-thiouridine(34) in tRNA + (2E)-geranyl diphosphate = 5-methylaminomethyl-S-(2E)-geranyl-thiouridine(34) in tRNA + diphosphate. The enzyme catalyses 5-methylaminomethyl-S-(2E)-geranyl-thiouridine(34) in tRNA + selenophosphate + H(+) = 5-methylaminomethyl-2-(Se-phospho)selenouridine(34) in tRNA + (2E)-thiogeraniol. It carries out the reaction 5-methylaminomethyl-2-(Se-phospho)selenouridine(34) in tRNA + H2O = 5-methylaminomethyl-2-selenouridine(34) in tRNA + phosphate. Its function is as follows. Involved in the post-transcriptional modification of the uridine at the wobble position (U34) of tRNA(Lys), tRNA(Glu) and tRNA(Gln). Catalyzes the conversion of 2-thiouridine (S2U-RNA) to 2-selenouridine (Se2U-RNA). Acts in a two-step process involving geranylation of 2-thiouridine (S2U) to S-geranyl-2-thiouridine (geS2U) and subsequent selenation of the latter derivative to 2-selenouridine (Se2U) in the tRNA chain. The chain is tRNA 2-selenouridine synthase from Pseudomonas savastanoi pv. phaseolicola (strain 1448A / Race 6) (Pseudomonas syringae pv. phaseolicola (strain 1448A / Race 6)).